The sequence spans 297 residues: Bifunctional protein FolD (297 aa).

Residues 167–169 (GRS), serine 192, and isoleucine 233 contribute to the NADP(+) site.

The protein belongs to the tetrahydrofolate dehydrogenase/cyclohydrolase family. In terms of assembly, homodimer.

It catalyses the reaction (6R)-5,10-methylene-5,6,7,8-tetrahydrofolate + NADP(+) = (6R)-5,10-methenyltetrahydrofolate + NADPH. The enzyme catalyses (6R)-5,10-methenyltetrahydrofolate + H2O = (6R)-10-formyltetrahydrofolate + H(+). It functions in the pathway one-carbon metabolism; tetrahydrofolate interconversion. Catalyzes the oxidation of 5,10-methylenetetrahydrofolate to 5,10-methenyltetrahydrofolate and then the hydrolysis of 5,10-methenyltetrahydrofolate to 10-formyltetrahydrofolate. The chain is Bifunctional protein FolD from Caulobacter vibrioides (strain ATCC 19089 / CIP 103742 / CB 15) (Caulobacter crescentus).